We begin with the raw amino-acid sequence, 423 residues long: MSTREYDDLSHAFAGAGGGLLSMTLTYPLVTLTTHAQTMVKLKKDQEKEKENSNEDGSLSPKSSNTSDVSQKKISQFEILKKILKDQGAKGLYNGLESALFGIAVTNFVYYYFYELTGKTLNRRSNPQTASNSKKVALKKGLSVWQSMAAGAVAGTISRVATNPIWVANTRMTILSKNQGKLGKLNTIEAIIYILKNEGWQKLFTGIVPALFLVLNPIIQYTIFEQLKSFIVKIKKRNITPVDALLLGAFGKLIATIITYPYITLRSRMHVKSMTEISEDVEKERTDSVQSLPEDGSDEDNLKENSAKSPYAETITKIISKLPSPIVSMFTLGYGMYKEEGVSSFYRGLSVKLLQSILNAAFLFYFKEELLILSDGIIKSTKRATGLANNPYNAKDVIHSFEKALSMRSPRTRTTTVASSAKE.

Solcar repeat units follow at residues 6–120, 142–230, and 239–373; these read YDDL…TGKT, LSVW…LKSF, and ITPV…LLIL. Residues 12–32 form a helical membrane-spanning segment; sequence AFAGAGGGLLSMTLTYPLVTL. A compositionally biased stretch (basic and acidic residues) spans 43-53; the sequence is KKDQEKEKENS. The disordered stretch occupies residues 43 to 70; the sequence is KKDQEKEKENSNEDGSLSPKSSNTSDVS. Residues 55–70 are compositionally biased toward polar residues; the sequence is EDGSLSPKSSNTSDVS. 4 consecutive transmembrane segments (helical) span residues 98–118, 148–168, 204–224, and 245–265; these read SALFGIAVTNFVYYYFYELTG, MAAGAVAGTISRVATNPIWVA, FTGIVPALFLVLNPIIQYTIF, and LLLGAFGKLIATIITYPYITL. The segment at 278–308 is disordered; that stretch reads SEDVEKERTDSVQSLPEDGSDEDNLKENSAK. Residues 353–373 traverse the membrane as a helical segment; that stretch reads LLQSILNAAFLFYFKEELLIL.

Belongs to the mitochondrial carrier (TC 2.A.29) family.

The protein resides in the peroxisome membrane. In terms of biological role, may have transport activity. This is Peroxisomal membrane protein PMP47A (PMP47A) from Candida boidinii (Yeast).